Here is a 119-residue protein sequence, read N- to C-terminus: Large ribosomal subunit protein uL22c (119 aa).

It belongs to the universal ribosomal protein uL22 family. In terms of assembly, part of the 50S ribosomal subunit.

The protein localises to the plastid. Its subcellular location is the chloroplast. Its function is as follows. This protein binds specifically to 23S rRNA. Functionally, the globular domain of the protein is located near the polypeptide exit tunnel on the outside of the subunit, while an extended beta-hairpin is found that lines the wall of the exit tunnel in the center of the 70S ribosome. The protein is Large ribosomal subunit protein uL22c (rpl22) of Mesostigma viride (Green alga).